Consider the following 88-residue polypeptide: HssA/B-like protein 13 (88 aa).

Belongs to the hssA/B family.

The chain is HssA/B-like protein 13 (hssl13) from Dictyostelium discoideum (Social amoeba).